Reading from the N-terminus, the 201-residue chain is ATP-dependent Clp protease proteolytic subunit (201 aa).

The active-site Nucleophile is the serine 103. Histidine 128 is a catalytic residue.

This sequence belongs to the peptidase S14 family. As to quaternary structure, fourteen ClpP subunits assemble into 2 heptameric rings which stack back to back to give a disk-like structure with a central cavity, resembling the structure of eukaryotic proteasomes.

It localises to the cytoplasm. It catalyses the reaction Hydrolysis of proteins to small peptides in the presence of ATP and magnesium. alpha-casein is the usual test substrate. In the absence of ATP, only oligopeptides shorter than five residues are hydrolyzed (such as succinyl-Leu-Tyr-|-NHMec, and Leu-Tyr-Leu-|-Tyr-Trp, in which cleavage of the -Tyr-|-Leu- and -Tyr-|-Trp bonds also occurs).. In terms of biological role, cleaves peptides in various proteins in a process that requires ATP hydrolysis. Has a chymotrypsin-like activity. Plays a major role in the degradation of misfolded proteins. The chain is ATP-dependent Clp protease proteolytic subunit from Bordetella avium (strain 197N).